The sequence spans 515 residues: ATP synthase subunit alpha (515 aa).

Gly169–Thr176 provides a ligand contact to ATP.

The protein belongs to the ATPase alpha/beta chains family. As to quaternary structure, F-type ATPases have 2 components, CF(1) - the catalytic core - and CF(0) - the membrane proton channel. CF(1) has five subunits: alpha(3), beta(3), gamma(1), delta(1), epsilon(1). CF(0) has three main subunits: a(1), b(2) and c(9-12). The alpha and beta chains form an alternating ring which encloses part of the gamma chain. CF(1) is attached to CF(0) by a central stalk formed by the gamma and epsilon chains, while a peripheral stalk is formed by the delta and b chains.

The protein localises to the cell inner membrane. It catalyses the reaction ATP + H2O + 4 H(+)(in) = ADP + phosphate + 5 H(+)(out). In terms of biological role, produces ATP from ADP in the presence of a proton gradient across the membrane. The alpha chain is a regulatory subunit. The sequence is that of ATP synthase subunit alpha from Neisseria gonorrhoeae (strain ATCC 700825 / FA 1090).